The following is a 344-amino-acid chain: Dihydroorotase (344 aa).

Zn(2+)-binding residues include His14 and His16. Substrate is bound by residues 16–18 (HFR) and Asn42. Zn(2+)-binding residues include Lys100, His137, and His175. Lys100 is modified (N6-carboxylysine). A substrate-binding site is contributed by His137. Leu220 is a binding site for substrate. Asp248 is a binding site for Zn(2+). The active site involves Asp248. His252 and Ala264 together coordinate substrate.

Belongs to the metallo-dependent hydrolases superfamily. DHOase family. Class II DHOase subfamily. Homodimer. Zn(2+) is required as a cofactor.

It catalyses the reaction (S)-dihydroorotate + H2O = N-carbamoyl-L-aspartate + H(+). Its pathway is pyrimidine metabolism; UMP biosynthesis via de novo pathway; (S)-dihydroorotate from bicarbonate: step 3/3. Functionally, catalyzes the reversible cyclization of carbamoyl aspartate to dihydroorotate. The polypeptide is Dihydroorotase (Erythrobacter litoralis (strain HTCC2594)).